The following is a 61-amino-acid chain: Small ribosomal subunit protein uS14 (61 aa).

Zn(2+) is bound by residues C24, C27, C40, and C43.

It belongs to the universal ribosomal protein uS14 family. Zinc-binding uS14 subfamily. As to quaternary structure, part of the 30S ribosomal subunit. Contacts proteins S3 and S10. Requires Zn(2+) as cofactor.

Its function is as follows. Binds 16S rRNA, required for the assembly of 30S particles and may also be responsible for determining the conformation of the 16S rRNA at the A site. This chain is Small ribosomal subunit protein uS14, found in Heliobacterium modesticaldum (strain ATCC 51547 / Ice1).